The chain runs to 282 residues: Phosphatidylserine decarboxylase proenzyme (282 aa).

Active-site charge relay system; for autoendoproteolytic cleavage activity residues include Asp-89, His-145, and Ser-249. The active-site Schiff-base intermediate with substrate; via pyruvic acid; for decarboxylase activity is Ser-249. At Ser-249 the chain carries Pyruvic acid (Ser); by autocatalysis.

Belongs to the phosphatidylserine decarboxylase family. PSD-B subfamily. Prokaryotic type I sub-subfamily. Heterodimer of a large membrane-associated beta subunit and a small pyruvoyl-containing alpha subunit. Pyruvate is required as a cofactor. Post-translationally, is synthesized initially as an inactive proenzyme. Formation of the active enzyme involves a self-maturation process in which the active site pyruvoyl group is generated from an internal serine residue via an autocatalytic post-translational modification. Two non-identical subunits are generated from the proenzyme in this reaction, and the pyruvate is formed at the N-terminus of the alpha chain, which is derived from the carboxyl end of the proenzyme. The autoendoproteolytic cleavage occurs by a canonical serine protease mechanism, in which the side chain hydroxyl group of the serine supplies its oxygen atom to form the C-terminus of the beta chain, while the remainder of the serine residue undergoes an oxidative deamination to produce ammonia and the pyruvoyl prosthetic group on the alpha chain. During this reaction, the Ser that is part of the protease active site of the proenzyme becomes the pyruvoyl prosthetic group, which constitutes an essential element of the active site of the mature decarboxylase.

Its subcellular location is the cell membrane. The catalysed reaction is a 1,2-diacyl-sn-glycero-3-phospho-L-serine + H(+) = a 1,2-diacyl-sn-glycero-3-phosphoethanolamine + CO2. The protein operates within phospholipid metabolism; phosphatidylethanolamine biosynthesis; phosphatidylethanolamine from CDP-diacylglycerol: step 2/2. Its function is as follows. Catalyzes the formation of phosphatidylethanolamine (PtdEtn) from phosphatidylserine (PtdSer). In Anaeromyxobacter sp. (strain K), this protein is Phosphatidylserine decarboxylase proenzyme.